The following is a 139-amino-acid chain: Inactive palmitoleoyl-protein carboxylesterase notum1b (139 aa).

The protein belongs to the pectinacetylesterase family. Notum subfamily.

Probable inactive palmitoleoyl-protein carboxylesterase. The chain is Inactive palmitoleoyl-protein carboxylesterase notum1b from Danio rerio (Zebrafish).